We begin with the raw amino-acid sequence, 78 residues long: DNA-directed RNA polymerase subunit Rpo5 (78 aa).

It belongs to the archaeal Rpo5/eukaryotic RPB5 RNA polymerase subunit family. As to quaternary structure, part of the RNA polymerase complex.

It localises to the cytoplasm. It carries out the reaction RNA(n) + a ribonucleoside 5'-triphosphate = RNA(n+1) + diphosphate. Functionally, DNA-dependent RNA polymerase (RNAP) catalyzes the transcription of DNA into RNA using the four ribonucleoside triphosphates as substrates. The chain is DNA-directed RNA polymerase subunit Rpo5 from Methanocaldococcus jannaschii (strain ATCC 43067 / DSM 2661 / JAL-1 / JCM 10045 / NBRC 100440) (Methanococcus jannaschii).